We begin with the raw amino-acid sequence, 380 residues long: Cytochrome b (380 aa).

Helical transmembrane passes span 34-54 (FGSL…LLAA), 78-99 (WLIR…YMHI), 114-134 (WNTG…GYVL), and 179-199 (FFTL…IHLT). Heme b is bound by residues histidine 84 and histidine 98. Positions 183 and 197 each coordinate heme b. Residue histidine 202 coordinates a ubiquinone. The next 4 membrane-spanning stretches (helical) occupy residues 227 to 247 (LKDT…ALFS), 289 to 309 (LGGV…PLLH), 321 to 341 (LSQL…WVGS), and 348 to 368 (FIII…ILFP).

The protein belongs to the cytochrome b family. The cytochrome bc1 complex contains 11 subunits: 3 respiratory subunits (MT-CYB, CYC1 and UQCRFS1), 2 core proteins (UQCRC1 and UQCRC2) and 6 low-molecular weight proteins (UQCRH/QCR6, UQCRB/QCR7, UQCRQ/QCR8, UQCR10/QCR9, UQCR11/QCR10 and a cleavage product of UQCRFS1). This cytochrome bc1 complex then forms a dimer. Heme b serves as cofactor.

The protein localises to the mitochondrion inner membrane. Functionally, component of the ubiquinol-cytochrome c reductase complex (complex III or cytochrome b-c1 complex) that is part of the mitochondrial respiratory chain. The b-c1 complex mediates electron transfer from ubiquinol to cytochrome c. Contributes to the generation of a proton gradient across the mitochondrial membrane that is then used for ATP synthesis. The protein is Cytochrome b (MT-CYB) of Balearica regulorum (Grey crowned-crane).